The following is a 156-amino-acid chain: Ribonuclease H (156 aa).

An RNase H type-1 domain is found at glutamate 3–glutamate 144. Residues aspartate 12, glutamate 50, aspartate 72, and aspartate 136 each contribute to the Mg(2+) site.

This sequence belongs to the RNase H family. Monomer. The cofactor is Mg(2+).

Its subcellular location is the cytoplasm. The enzyme catalyses Endonucleolytic cleavage to 5'-phosphomonoester.. Endonuclease that specifically degrades the RNA of RNA-DNA hybrids. This is Ribonuclease H from Shewanella baltica (strain OS223).